The following is a 694-amino-acid chain: NADPH--cytochrome P450 reductase (694 aa).

Over 1-8 (MAQLDTLD) the chain is Lumenal. Residues 9–31 (LVVLAVLLVGSVAYFTKGTYWAV) traverse the membrane as a helical segment. Over 32-694 (AKDPYASTGP…RGRYQEDVWS (663 aa)) the chain is Cytoplasmic. One can recognise a Flavodoxin-like domain in the interval 66-220 (CVIFYGSQTG…DFLAWKEPMW (155 aa)). FMN contacts are provided by residues 72–77 (SQTGTA), 123–126 (ATYG), 168–177 (LGNNTYEHYN), and Asp-203. An FAD-binding FR-type domain is found at 276-537 (HNPFIAPIAE…HVRHSNFKLP (262 aa)). Arg-295 contacts NADP(+). Residues 450–453 (RYYS), 468–470 (TAV), and 485–488 (GVTT) contribute to the FAD site. NADP(+) contacts are provided by residues Thr-551, 613–614 (SR), 619–623 (KVYVQ), and Glu-655. FAD is bound at residue Trp-693.

The protein belongs to the NADPH--cytochrome P450 reductase family. In the N-terminal section; belongs to the flavodoxin family. This sequence in the C-terminal section; belongs to the flavoprotein pyridine nucleotide cytochrome reductase family. It depends on FAD as a cofactor. FMN is required as a cofactor.

The protein resides in the endoplasmic reticulum membrane. Its subcellular location is the mitochondrion outer membrane. The protein localises to the cell membrane. The enzyme catalyses 2 oxidized [cytochrome P450] + NADPH = 2 reduced [cytochrome P450] + NADP(+) + H(+). Functionally, this enzyme is required for electron transfer from NADP to cytochrome P450 in microsomes. It can also provide electron transfer to heme oxygenase and cytochrome B5. Involved in ergosterol biosynthesis. The chain is NADPH--cytochrome P450 reductase from Aspergillus niger.